Consider the following 1335-residue polypeptide: MIIKEYRIPLPMTVDEYRIAQLYMIQKKSRNETHGQGSGVEILENRPYTDGPGGSGQYTHKVYHVGMHIPGWFRSILPKAALRVVEESWNAYPYTRTRFTCPFVEKFSIDIETFYKTDTGENNNVFNLSPVEKSQLITDIIDIVKDPVPPSEYKTEEDPKLFQSVKTCRGPLSENWIQEYKKRLLPIMCAYKLCKVEFRYWGMQSKIERFIHDTGLRRVMVRAHRQAWCWQDEWYGLTMEKIRELEREVQLMLSRKMAQFSEEGPSELSKDSATKDQASGTTSDPGSKNGEPLGRGLKKQWSTSSKSSRSSKRGASPSRHSISEWRMQSIARDSDEGSEEEFFDAHENLYCTEEKQAKDMTKWNSNDLMDKMESPEPEESQDEIYQQSGSEFRVASSVEQLNIIEDEVSQPLAAPPSKIHVLLLVLHGGTILDTGAGDPSSKQGDTNTITNVFDTVMRVHYPSALGHLAIRLVPCPPICADAFALVSNLSPYGHDEGCLSSSQDHIPLAALPLLATSSPQYQEAVATVIQRANLAYGDFIKSQEGVTFNGQVCLIGDCVGGILAFDALCYSGQPVSESQSSSRRGSVVSMQDADLLSPGTLANAAHCSGGSGGGGSGGSSLESSRHLSRSNIDIPRSNGTEDSRRQLPRKRSDSSTYELDTIQQHQAFLSSLHASVLRNEPSSRRSSSSTMLDGAGALGKFDFEIADLFLFGCPLGLVLALRKTVIPSLDVFQLRPACQQVYNLFHPADPSASRLEPLLERRFHSLPPFSIPRYQRYPLGDGCSTLLADVLQTHNTVFQEHAAPSSPGTAPAGRGFRRASEISIASQVSGMAESYTASSIAQKGPSSLNHTPSIRRLSLLALPPPSPTTQGPRARARQVSPNLERAPCLPDLDIGEVAAKWWGQKRIDYALYCPDALTAFPTVALPHLFHASYWESTDVVSFLLRQVMRHDSSSILELDGKEVSVFTPSQPRERWQRKRTHVKLRNVAANHRINDAVANEDGPQVVTGRFMYGPLDMVTLTGEKVDVHIMTQPPSGEWLHLDTLVTNSSGRVSYTIPETHRLGVGVYPIKMVVRGDHTFADSYITVLPRGTEFVVFSIDGSFAASVSIMGSDPKVRAGAVDVVRHWQDLGYLIIYVTGRPDMQKQRVVAWLAQHNFPHGVVSFCDGLVHDPLRHKANFLKLLISELHLRAHAAYGSTKDVAVYNSISLSPMHIYIVGRPTKKLQQQCQFITDGYAAHLAQLKYNHRARPARNTATRMALRKGSFGLPGQSDFLRSRNHLLRTISAQPSGPSHRHDRTQTQMDSEQRGQRSMSVAASCWGRAMAGRLEPGAATGPK.

Disordered stretches follow at residues 32-51 and 262-341; these read ETHG…YTDG and EEGP…SEEE. Positions 275 to 286 are enriched in polar residues; sequence KDQASGTTSDPG. The span at 299–319 shows a compositional bias: low complexity; sequence KQWSTSSKSSRSSKRGASPSR. 4 positions are modified to phosphoserine: serine 334, serine 338, serine 365, and serine 586. The segment at 606–657 is disordered; it reads HCSGGSGGGGSGGSSLESSRHLSRSNIDIPRSNGTEDSRRQLPRKRSDSSTY. A compositionally biased stretch (gly residues) spans 609 to 618; sequence GGSGGGGSGG. Serine 630 is modified (phosphoserine). A compositionally biased stretch (basic and acidic residues) spans 639–653; the sequence is GTEDSRRQLPRKRSD. Residues serine 686, serine 687, and serine 688 each carry the phosphoserine modification. The DDHD domain occupies 701-949; that stretch reads FDFEIADLFL…VSFLLRQVMR (249 aa). Residue arginine 814 is modified to Omega-N-methylarginine. The interval 861 to 880 is disordered; it reads ALPPPSPTTQGPRARARQVS. Serine 1263 is subject to Phosphoserine. The interval 1282–1313 is disordered; sequence TISAQPSGPSHRHDRTQTQMDSEQRGQRSMSV. Polar residues predominate over residues 1298 to 1313; that stretch reads QTQMDSEQRGQRSMSV.

Belongs to the PtdIns transfer protein family. PI transfer class IIA subfamily. In terms of assembly, interacts with CPNE4 (via VWFA domain). Interacts with PTK2B via its C-terminus. In terms of tissue distribution, detected in retina and in the dentate gyrus of the cerebellum.

Its subcellular location is the endomembrane system. It localises to the cytoplasm. The protein localises to the cytoskeleton. Functionally, catalyzes the transfer of phosphatidylinositol and phosphatidylcholine between membranes (in vitro). Binds calcium ions. This is Membrane-associated phosphatidylinositol transfer protein 2 (Pitpnm2) from Mus musculus (Mouse).